The chain runs to 401 residues: Protein nanos (401 aa).

The disordered stretch occupies residues 181–207 (LGRMSYGSAPPQVQMPPQQQHQQQQGL). The segment covering 190–205 (PPQVQMPPQQQHQQQQ) has biased composition (low complexity). Residues 318-372 (HCVFCENNNEPEAVINSHSVRDNFNRVLCPKLRTYVCPICGASGDSAHTIKYCPK) form a Nanos-type zinc finger. 8 residues coordinate Zn(2+): Cys-319, Cys-322, His-335, Cys-346, Cys-354, Cys-357, His-365, and Cys-370. 2 short sequence motifs (C2HC) span residues 319–346 (CVFCENNNEPEAVINSHSVRDNFNRVLC) and 354–370 (CPICGASGDSAHTIKYC).

This sequence belongs to the nanos family. Interacts with pum and brat. Interacts with cup. Interacts with mei-P26; possibly involved in regulation of brat levels. Interacts with wh; may be involved in mei-P26-dependent derepression of the BMP signaling pathway. Acts via the formation of a quaternary complex composed of pum, nanos, brat and the 3'-UTR mRNA of hb. Binds RNA with no specificity. Posterior part of the embryo. While the transcript is present throughout the embryo, nanos translation is controlled by smg, and the protein is found in pole plasm and pole cells. In the female ovary expressed in germline stem cells, precystoblasts and in maturing cystoblasts; in early cystoblasts expression is post-transcriptionally repressed by bam in a 3'UTR-dependent manner.

It localises to the cytoplasm. Its subcellular location is the cytoplasmic ribonucleoprotein granule. In terms of biological role, maternal RNA-binding protein that is required for germ cells proliferation and self-renewal. Acts by forming a complex with pum and brat that regulates translation and mRNA stability. The complex binds to the Nanos Response Element (NRE), a 16 bp sequence in the hb mRNA 3'-UTR and prevents its translation. Controls posterior development. Rescuing factor for the abdominal defect of posterior group mutants. The other posterior group genes are not required for nanos function but rather play a role in localization or distribution of nanos protein. The protein is Protein nanos of Drosophila melanogaster (Fruit fly).